Reading from the N-terminus, the 959-residue chain is Protein SEY1 homolog 1 (959 aa).

Residues 1–767 lie on the Cytoplasmic side of the membrane; it reads MQESDVFHNQ…ELAAITVHSK (767 aa). A coiled-coil region spans residues 9–86; sequence NQLRVEMLKK…EEEKKEKENY (78 aa). The interval 62–81 is disordered; that stretch reads EEKENMKVEEEEIKEEEEKK. The GB1/RHD3-type G domain maps to 123–340; sequence GFNYNMLSIL…NQNTYFRPIY (218 aa). 133–140 lines the GTP pocket; the sequence is GPQNSGKS. A helical membrane pass occupies residues 768–788; the sequence is TPMWLILLIAFLSFDNIVYVF. Over 789 to 791 the chain is Lumenal; that stretch reads KSP. Residues 792 to 812 form a helical membrane-spanning segment; it reads TLLALTLIIIGIIYSLNKIGY. Over 813–959 the chain is Cytoplasmic; it reads AYLIDSVISY…LNKIKEANEF (147 aa). Residues 849 to 868 form a disordered region; sequence EAPKRKRPQKKTQDDKPKSS.

It belongs to the TRAFAC class dynamin-like GTPase superfamily. GB1/RHD3 GTPase family. RHD3 subfamily.

The protein resides in the endoplasmic reticulum membrane. In terms of biological role, probable GTP-binding protein that may be involved in cell development. This chain is Protein SEY1 homolog 1, found in Entamoeba histolytica (strain ATCC 30459 / HM-1:IMSS / ABRM).